Reading from the N-terminus, the 542-residue chain is Chaperonin GroEL (542 aa).

ATP-binding positions include 29 to 32, Lys50, 86 to 90, Gly413, 477 to 479, and Asp493; these read TLGP, DGTTT, and NAA.

Belongs to the chaperonin (HSP60) family. As to quaternary structure, forms a cylinder of 14 subunits composed of two heptameric rings stacked back-to-back. Interacts with the co-chaperonin GroES.

It is found in the cytoplasm. The catalysed reaction is ATP + H2O + a folded polypeptide = ADP + phosphate + an unfolded polypeptide.. In terms of biological role, together with its co-chaperonin GroES, plays an essential role in assisting protein folding. The GroEL-GroES system forms a nano-cage that allows encapsulation of the non-native substrate proteins and provides a physical environment optimized to promote and accelerate protein folding. The sequence is that of Chaperonin GroEL from Solibacter usitatus (strain Ellin6076).